Here is a 549-residue protein sequence, read N- to C-terminus: Protein X92 (549 aa).

This chain is Protein X92, found in Trypanosoma brucei brucei.